The following is a 192-amino-acid chain: Chromophore lyase CpcS/CpeS 2 (192 aa).

Belongs to the CpcS/CpeS biliprotein lyase family.

Functionally, covalently attaches a chromophore to Cys residue(s) of phycobiliproteins. The polypeptide is Chromophore lyase CpcS/CpeS 2 (Synechocystis sp. (strain ATCC 27184 / PCC 6803 / Kazusa)).